An 835-amino-acid polypeptide reads, in one-letter code: Serine/threonine-protein kinase TNNI3K (835 aa).

Residues 21–51 (SESYVITIERLEDDLQIKEKELTELRNIFGS) adopt a coiled-coil conformation. ANK repeat units follow at residues 66-96 (NGLS…RPSR), 100-129 (NGFT…DIQQ), 133-162 (GGLT…NVNI), 166-195 (VFFT…DVNV), 199-228 (VGDR…KADV), 234-263 (EDHV…EVQP), 269-298 (YGDT…TESL), 304-335 (FSET…NINH), 339-368 (DGHT…DMNL), and 381-410 (DEQT…PQDE). A Protein kinase domain is found at 463 to 723 (IEFHEIIGSG…EVVMKLEECL (261 aa)). Residues 469 to 477 (IGSGSFGKV) and K490 contribute to the ATP site. Residue D588 is the Proton acceptor of the active site. Residues 732-746 (ASSNSSGSLSPSSSS) show a composition bias toward low complexity. A disordered region spans residues 732 to 751 (ASSNSSGSLSPSSSSDCLVN).

This sequence belongs to the protein kinase superfamily. TKL Ser/Thr protein kinase family. MAP kinase kinase kinase subfamily. As to quaternary structure, interacts with TNNI3, ACTC1, ACTA1, MYBPC3, AIP, FABP3 and HADHB. Mg(2+) is required as a cofactor. Post-translationally, autophosphorylated. In terms of tissue distribution, highly expressed in both adult and fetal heart.

It localises to the nucleus. The protein localises to the cytoplasm. The catalysed reaction is L-seryl-[protein] + ATP = O-phospho-L-seryl-[protein] + ADP + H(+). The enzyme catalyses L-threonyl-[protein] + ATP = O-phospho-L-threonyl-[protein] + ADP + H(+). In terms of biological role, may play a role in cardiac physiology. This chain is Serine/threonine-protein kinase TNNI3K, found in Homo sapiens (Human).